The primary structure comprises 557 residues: Probable phenylalanine--tRNA ligase beta subunit (557 aa).

In terms of domain architecture, B5 spans 276–352 (MHNRSYVMGL…IAHGFNNFRR (77 aa)). The Mg(2+) site is built by Asp330, Asp336, Glu339, and Asp340.

Belongs to the phenylalanyl-tRNA synthetase beta subunit family. Type 2 subfamily. In terms of assembly, tetramer of two alpha and two beta subunits. Mg(2+) serves as cofactor.

Its subcellular location is the cytoplasm. It carries out the reaction tRNA(Phe) + L-phenylalanine + ATP = L-phenylalanyl-tRNA(Phe) + AMP + diphosphate + H(+). The sequence is that of Probable phenylalanine--tRNA ligase beta subunit from Encephalitozoon cuniculi (strain GB-M1) (Microsporidian parasite).